Here is a 139-residue protein sequence, read N- to C-terminus: Putative nickel-responsive regulator (139 aa).

Ni(2+) contacts are provided by H79, H90, H92, and C98.

This sequence belongs to the transcriptional regulatory CopG/NikR family. It depends on Ni(2+) as a cofactor.

Functionally, transcriptional regulator. This chain is Putative nickel-responsive regulator, found in Geobacter sp. (strain M21).